We begin with the raw amino-acid sequence, 182 residues long: Probable chorismate pyruvate-lyase (182 aa).

3 residues coordinate substrate: R81, L119, and E171.

The protein belongs to the UbiC family.

The protein localises to the cytoplasm. It catalyses the reaction chorismate = 4-hydroxybenzoate + pyruvate. Its pathway is cofactor biosynthesis; ubiquinone biosynthesis. Removes the pyruvyl group from chorismate, with concomitant aromatization of the ring, to provide 4-hydroxybenzoate (4HB) for the ubiquinone pathway. The sequence is that of Probable chorismate pyruvate-lyase from Pseudomonas putida (Arthrobacter siderocapsulatus).